The sequence spans 219 residues: Elongation factor Ts (219 aa).

The interval 82 to 85 (TDFV) is involved in Mg(2+) ion dislocation from EF-Tu.

Belongs to the EF-Ts family.

It localises to the cytoplasm. Associates with the EF-Tu.GDP complex and induces the exchange of GDP to GTP. It remains bound to the aminoacyl-tRNA.EF-Tu.GTP complex up to the GTP hydrolysis stage on the ribosome. The polypeptide is Elongation factor Ts (Anaeromyxobacter dehalogenans (strain 2CP-1 / ATCC BAA-258)).